We begin with the raw amino-acid sequence, 248 residues long: Ribosomal RNA small subunit methyltransferase G (248 aa).

Residues G85, F90, 108–110 (DSS), 137–138 (AE), and R156 contribute to the S-adenosyl-L-methionine site.

It belongs to the methyltransferase superfamily. RNA methyltransferase RsmG family.

It is found in the cytoplasm. Its function is as follows. Specifically methylates the N7 position of a guanine in 16S rRNA. The sequence is that of Ribosomal RNA small subunit methyltransferase G from Prochlorococcus marinus (strain NATL2A).